A 239-amino-acid chain; its full sequence is Leucine rich adaptor protein 1 (239 aa).

LRR repeat units follow at residues 55–83 (LGDKIMALRMELAYLRAIDVKILQQLVTL) and 93–114 (LLEERGTLTSHCSSLTSSQYSL). Positions 107–118 (LTSSQYSLTGGS) are enriched in low complexity. Positions 107–140 (LTSSQYSLTGGSPERSRRGSWDSLPDTSSTDRLD) are disordered. Phosphoserine occurs at positions 118, 126, and 129.

In terms of assembly, forms a tripartite complex with CDC42BPA/CDC42BPB and MYO18A acting as an adapter connecting both. Its binding to CDC42BPA/CDC42BPB results in their activation by abolition of their negative autoregulation. Interacts with CDC42BPA and CDC42BPB. Phosphorylated.

Its subcellular location is the cytoplasm. Its function is as follows. Acts as an activator of the canonical NF-kappa-B pathway and drive the production of pro-inflammatory cytokines. Promotes the antigen (Ag)-presenting and priming function of dendritic cells via the canonical NF-kappa-B pathway. In concert with MYO18A and CDC42BPA/CDC42BPB, is involved in modulating lamellar actomyosin retrograde flow that is crucial to cell protrusion and migration. Activates CDC42BPA/CDC42BPB and targets it to actomyosin through its interaction with MYO18A, leading to MYL9/MLC2 phosphorylation and MYH9/MYH10-dependent actomyosin assembly in the lamella. The polypeptide is Leucine rich adaptor protein 1 (Lurap1) (Rattus norvegicus (Rat)).